The primary structure comprises 375 residues: Chaperone protein DnaJ (375 aa).

The region spanning 4–68 (DYYEILGVSR…ETRARYDRFG (65 aa)) is the J domain. The CR-type zinc finger occupies 135 to 217 (GGEKEIRISH…CDGKGANQVT (83 aa)). Zn(2+) is bound by residues Cys148, Cys151, Cys165, Cys168, Cys191, Cys194, Cys205, and Cys208. 4 CXXCXGXG motif repeats span residues 148–155 (CEVCSGSG), 165–172 (CSTCSGSG), 191–198 (CPTCNGTG), and 205–212 (CDACDGKG).

This sequence belongs to the DnaJ family. Homodimer. Requires Zn(2+) as cofactor.

The protein resides in the cytoplasm. Its function is as follows. Participates actively in the response to hyperosmotic and heat shock by preventing the aggregation of stress-denatured proteins and by disaggregating proteins, also in an autonomous, DnaK-independent fashion. Unfolded proteins bind initially to DnaJ; upon interaction with the DnaJ-bound protein, DnaK hydrolyzes its bound ATP, resulting in the formation of a stable complex. GrpE releases ADP from DnaK; ATP binding to DnaK triggers the release of the substrate protein, thus completing the reaction cycle. Several rounds of ATP-dependent interactions between DnaJ, DnaK and GrpE are required for fully efficient folding. Also involved, together with DnaK and GrpE, in the DNA replication of plasmids through activation of initiation proteins. The polypeptide is Chaperone protein DnaJ (Nostoc punctiforme (strain ATCC 29133 / PCC 73102)).